A 606-amino-acid chain; its full sequence is Protein spire homolog 2 (606 aa).

Positions 21-219 (LSLEEVLKSY…RALFLETLEL (199 aa)) constitute a KIND domain. Residues 147-181 (KHCGSNAAKDEGYSGQDEEEEEEEEEEEEGAGRGI) form a disordered region. The segment covering 162–175 (QDEEEEEEEEEEEE) has biased composition (acidic residues). 2 consecutive WH2 domains span residues 263 to 277 (QLMKELRQGVKLKKV) and 357 to 374 (LHDRVLAEIRQDHKLRPV). Disordered stretches follow at residues 438 to 464 (DEDSPDGVDMRRVESSPTPLKRDRSFS) and 517 to 537 (CRSLSSDDRSSDPGGDSASHG). The segment covering 445-464 (VDMRRVESSPTPLKRDRSFS) has biased composition (basic and acidic residues). Positions 554-574 (LALTVDGVINVRRILVKAEME) are spir-box.

This sequence belongs to the spire family.

It is found in the cytoplasm. The protein resides in the cytoskeleton. It localises to the cytosol. The protein localises to the cell membrane. Its subcellular location is the cytoplasmic vesicle membrane. Functionally, acts as an actin nucleation factor, remains associated with the slow-growing pointed end of the new filament. Involved in intracellular vesicle transport along actin fibers, providing a novel link between actin cytoskeleton dynamics and intracellular transport. Required for asymmetric spindle positioning and asymmetric cell division during oocyte meiosis. Required for normal formation of the cleavage furrow and for polar body extrusion during female germ cell meiosis. Also acts in the nucleus: together with SPIRE1 and SPIRE2, promotes assembly of nuclear actin filaments in response to DNA damage in order to facilitate movement of chromatin and repair factors after DNA damage. The protein is Protein spire homolog 2 (spire2) of Danio rerio (Zebrafish).